Consider the following 494-residue polypeptide: Flavin-containing monooxygenase ustF2 (494 aa).

Residues 1-21 (MANPQTTRVAVVGAGISGVLA) form the signal peptide. 13–18 (GAGISG) is a binding site for FAD. Residues 73-93 (EPSYPAMKPSKADPPATNEQE) form a disordered region. 250 to 255 (GGGVSS) contacts NADP(+). A glycan (N-linked (GlcNAc...) asparagine) is linked at Asn-459.

It belongs to the FMO family.

It participates in mycotoxin biosynthesis. Its function is as follows. Flavin-containing monooxygenase; part of the gene cluster that mediates the biosynthesis of the secondary metabolite ustiloxin B, an antimitotic tetrapeptide. First, ustA is processed by the subtilisin-like endoprotease Kex2 that is outside the ustiloxin B gene cluster, at the C-terminal side of Arg-Lys, after transfer to Golgi apparatus through the endoplasmic reticulum (ER). Cleavage by KEX2 generates 16 peptides YAIG-I to YAIG-XVI. To process the precursor peptide further, at least two peptidases are necessary to cleave the N-terminal and C-terminal sides of the Tyr-Ala-Ile-Gly core peptide which serves as backbone for the synthesis of ustiloxin B, through cyclization and modification of the tyrosine with a non-protein coding amino acid, norvaline. One of the two peptidases must be the serine peptidase ustP; and the other pepdidase is probably ustH. Macrocyclization of the core peptide derived from ustA requires the tyrosinase ustQ, as well as the homologous oxidases ustYa and ustYb, and leads to the production of the first cyclization product N-desmethylustiloxin F. For the formation of N-desmethylustiloxin F, three oxidation steps are required, hydroxylation at the benzylic position, hydroxylation at either the aromatic ring of Tyr or beta-position of Ile, and oxidative cyclization. UstQ may catalyze the oxidation of a phenol moiety, whereas the ustYa and ustYb are most likely responsible for the remaining two-step oxidations. N-desmethylustiloxin F is then methylated by ustM to yield ustiloxin F which in turn substrate of the cytochrome P450 monooxygenase ustC which catalyzes the formation of S-deoxyustiloxin H. The flavoprotein monooxygenases ustF1 and ustF2 then participate in the modification of the side chain of S-deoxyustiloxin H, leading to the synthesis of an oxime intermediate, via ustiloxin H. Finally, carboxylative dehydration performed by the cysteine desulfurase-like protein ustD yields ustiloxin B. The sequence is that of Flavin-containing monooxygenase ustF2 from Aspergillus flavus (strain ATCC 200026 / FGSC A1120 / IAM 13836 / NRRL 3357 / JCM 12722 / SRRC 167).